The following is a 384-amino-acid chain: Dual-specificity RNA methyltransferase RlmN (384 aa).

Glutamate 93 (proton acceptor) is an active-site residue. A Radical SAM core domain is found at 99–339 (EETRGTLCVS…TTIRKTRGDD (241 aa)). Residues cysteine 106 and cysteine 344 are joined by a disulfide bond. Cysteine 113, cysteine 117, and cysteine 120 together coordinate [4Fe-4S] cluster. S-adenosyl-L-methionine-binding positions include 170 to 171 (GE), serine 202, 224 to 226 (SLH), and asparagine 301. Cysteine 344 functions as the S-methylcysteine intermediate in the catalytic mechanism.

The protein belongs to the radical SAM superfamily. RlmN family. The cofactor is [4Fe-4S] cluster.

Its subcellular location is the cytoplasm. It carries out the reaction adenosine(2503) in 23S rRNA + 2 reduced [2Fe-2S]-[ferredoxin] + 2 S-adenosyl-L-methionine = 2-methyladenosine(2503) in 23S rRNA + 5'-deoxyadenosine + L-methionine + 2 oxidized [2Fe-2S]-[ferredoxin] + S-adenosyl-L-homocysteine. The catalysed reaction is adenosine(37) in tRNA + 2 reduced [2Fe-2S]-[ferredoxin] + 2 S-adenosyl-L-methionine = 2-methyladenosine(37) in tRNA + 5'-deoxyadenosine + L-methionine + 2 oxidized [2Fe-2S]-[ferredoxin] + S-adenosyl-L-homocysteine. In terms of biological role, specifically methylates position 2 of adenine 2503 in 23S rRNA and position 2 of adenine 37 in tRNAs. m2A2503 modification seems to play a crucial role in the proofreading step occurring at the peptidyl transferase center and thus would serve to optimize ribosomal fidelity. The sequence is that of Dual-specificity RNA methyltransferase RlmN from Cupriavidus necator (strain ATCC 17699 / DSM 428 / KCTC 22496 / NCIMB 10442 / H16 / Stanier 337) (Ralstonia eutropha).